A 428-amino-acid polypeptide reads, in one-letter code: Adenylosuccinate synthetase (428 aa).

GTP-binding positions include 12–18 and 40–42; these read GDEGKGK and GHT. Aspartate 13 serves as the catalytic Proton acceptor. Positions 13 and 40 each coordinate Mg(2+). Residues 13–16, 38–41, threonine 129, arginine 143, glutamine 224, threonine 239, and arginine 303 each bind IMP; these read DEGK and NAGH. Histidine 41 functions as the Proton donor in the catalytic mechanism. Residue 299–305 coordinates substrate; sequence VTTGRIR. GTP contacts are provided by residues arginine 305, 331-333, and 410-412; these read KVD and AYG.

Belongs to the adenylosuccinate synthetase family. As to quaternary structure, homodimer. The cofactor is Mg(2+).

The protein localises to the cytoplasm. It carries out the reaction IMP + L-aspartate + GTP = N(6)-(1,2-dicarboxyethyl)-AMP + GDP + phosphate + 2 H(+). Its pathway is purine metabolism; AMP biosynthesis via de novo pathway; AMP from IMP: step 1/2. Its function is as follows. Plays an important role in the de novo pathway of purine nucleotide biosynthesis. Catalyzes the first committed step in the biosynthesis of AMP from IMP. The protein is Adenylosuccinate synthetase of Francisella tularensis subsp. tularensis (strain FSC 198).